The sequence spans 156 residues: Transcriptional repressor NrdR (156 aa).

A zinc finger spans residues 3 to 34 (CPFCHSDNDKVQDSRTAEAGYVVRRKRLCQTC). In terms of domain architecture, ATP-cone spans 49–139 (VRVVKSDETR…VYRDFDDAKD (91 aa)).

The protein belongs to the NrdR family. The cofactor is Zn(2+).

In terms of biological role, negatively regulates transcription of bacterial ribonucleotide reductase nrd genes and operons by binding to NrdR-boxes. The chain is Transcriptional repressor NrdR from Rhodopirellula baltica (strain DSM 10527 / NCIMB 13988 / SH1).